The following is a 193-amino-acid chain: V-type sodium ATPase subunit E (193 aa).

The protein belongs to the V-ATPase E subunit family. Post-translationally, the N-terminus is blocked.

Functionally, involved in ATP-driven sodium extrusion. The polypeptide is V-type sodium ATPase subunit E (ntpE) (Enterococcus hirae (strain ATCC 9790 / DSM 20160 / JCM 8729 / LMG 6399 / NBRC 3181 / NCIMB 6459 / NCDO 1258 / NCTC 12367 / WDCM 00089 / R)).